The following is a 339-amino-acid chain: Aspartate carbamoyltransferase catalytic subunit (339 aa).

The carbamoyl phosphate site is built by Arg-59 and Thr-60. Lys-87 is a binding site for L-aspartate. Arg-109, His-142, and Gln-145 together coordinate carbamoyl phosphate. L-aspartate-binding residues include Arg-182 and Arg-253. Carbamoyl phosphate is bound by residues Gly-294 and Pro-295.

Belongs to the aspartate/ornithine carbamoyltransferase superfamily. ATCase family. In terms of assembly, heterododecamer (2C3:3R2) of six catalytic PyrB chains organized as two trimers (C3), and six regulatory PyrI chains organized as three dimers (R2).

It carries out the reaction carbamoyl phosphate + L-aspartate = N-carbamoyl-L-aspartate + phosphate + H(+). Its pathway is pyrimidine metabolism; UMP biosynthesis via de novo pathway; (S)-dihydroorotate from bicarbonate: step 2/3. Catalyzes the condensation of carbamoyl phosphate and aspartate to form carbamoyl aspartate and inorganic phosphate, the committed step in the de novo pyrimidine nucleotide biosynthesis pathway. The protein is Aspartate carbamoyltransferase catalytic subunit of Prochlorococcus marinus (strain NATL1A).